Reading from the N-terminus, the 275-residue chain is Release factor glutamine methyltransferase (275 aa).

S-adenosyl-L-methionine-binding positions include 117–121, D140, W168, and N182; that span reads GTGSG. 182-185 contributes to the substrate binding site; it reads NPPY.

This sequence belongs to the protein N5-glutamine methyltransferase family. PrmC subfamily.

It carries out the reaction L-glutaminyl-[peptide chain release factor] + S-adenosyl-L-methionine = N(5)-methyl-L-glutaminyl-[peptide chain release factor] + S-adenosyl-L-homocysteine + H(+). Its function is as follows. Methylates the class 1 translation termination release factors RF1/PrfA and RF2/PrfB on the glutamine residue of the universally conserved GGQ motif. The chain is Release factor glutamine methyltransferase from Buchnera aphidicola subsp. Schizaphis graminum (strain Sg).